The following is a 198-amino-acid chain: Peroxiredoxin-2F, mitochondrial (198 aa).

A mitochondrion-targeting transit peptide spans 1 to 27 (MASALLRKATVGGSAAAAAARWASRGL). One can recognise a Thioredoxin domain in the interval 34–198 (SDIVSAAPGV…SGAEVILDQI (165 aa)). Residue Cys-86 is the Cysteine sulfenic acid (-SOH) intermediate of the active site.

It belongs to the peroxiredoxin family. Prx5 subfamily. In terms of assembly, monomer.

It is found in the mitochondrion matrix. It carries out the reaction [glutaredoxin]-dithiol + a hydroperoxide = [glutaredoxin]-disulfide + an alcohol + H2O. In terms of biological role, thiol-specific peroxidase that catalyzes the reduction of hydrogen peroxide and organic hydroperoxides to water and alcohols, respectively. Plays a role in cell protection against oxidative stress by detoxifying peroxides. Reduces preferentially hydrogen peroxide rather than alkyl peroxides. May be involved in mitochondrial redox homeostasis. The chain is Peroxiredoxin-2F, mitochondrial (PRXIIF) from Oryza sativa subsp. japonica (Rice).